A 325-amino-acid chain; its full sequence is uncharacterized protein (325 aa).

The disordered stretch occupies residues 1 to 75 (MSQPPEHPGN…PPPGYPTHLQ (75 aa)). Over residues 24–70 (YPPPGYGAPPPPPGYGPPPGTYLPPGYNAPPPPPGYGPPPGPPPPGY) the composition is skewed to pro residues. 4 helical membrane passes run 96 to 116 (AVTLVVPVLAYAVALAAVIGA), 153 to 173 (IVMFLGYIALFALVLYMHAGI), 205 to 225 (LLIVAVTFIGGLLCVIPGLIF), and 273 to 293 (LVGELLCFVGMLIGIPVAALI).

Its subcellular location is the cell membrane. This is an uncharacterized protein from Mycobacterium tuberculosis (strain ATCC 25618 / H37Rv).